The primary structure comprises 101 residues: NAD(P)H-quinone oxidoreductase subunit 4L, chloroplastic (101 aa).

The next 3 helical transmembrane spans lie at 2–22 (MFEL…YGLI), 32–52 (ICLE…SDLF), and 61–81 (IFAI…LSIL).

This sequence belongs to the complex I subunit 4L family. In terms of assembly, NDH is composed of at least 16 different subunits, 5 of which are encoded in the nucleus.

It localises to the plastid. It is found in the chloroplast thylakoid membrane. It catalyses the reaction a plastoquinone + NADH + (n+1) H(+)(in) = a plastoquinol + NAD(+) + n H(+)(out). The catalysed reaction is a plastoquinone + NADPH + (n+1) H(+)(in) = a plastoquinol + NADP(+) + n H(+)(out). NDH shuttles electrons from NAD(P)H:plastoquinone, via FMN and iron-sulfur (Fe-S) centers, to quinones in the photosynthetic chain and possibly in a chloroplast respiratory chain. The immediate electron acceptor for the enzyme in this species is believed to be plastoquinone. Couples the redox reaction to proton translocation, and thus conserves the redox energy in a proton gradient. This is NAD(P)H-quinone oxidoreductase subunit 4L, chloroplastic from Lolium perenne (Perennial ryegrass).